Consider the following 145-residue polypeptide: D-aminoacyl-tRNA deacylase (145 aa).

The Gly-cisPro motif, important for rejection of L-amino acids motif lies at 137–138; sequence GP.

Belongs to the DTD family. Homodimer.

The protein localises to the cytoplasm. The enzyme catalyses glycyl-tRNA(Ala) + H2O = tRNA(Ala) + glycine + H(+). The catalysed reaction is a D-aminoacyl-tRNA + H2O = a tRNA + a D-alpha-amino acid + H(+). Functionally, an aminoacyl-tRNA editing enzyme that deacylates mischarged D-aminoacyl-tRNAs. Also deacylates mischarged glycyl-tRNA(Ala), protecting cells against glycine mischarging by AlaRS. Acts via tRNA-based rather than protein-based catalysis; rejects L-amino acids rather than detecting D-amino acids in the active site. By recycling D-aminoacyl-tRNA to D-amino acids and free tRNA molecules, this enzyme counteracts the toxicity associated with the formation of D-aminoacyl-tRNA entities in vivo and helps enforce protein L-homochirality. This Cereibacter sphaeroides (strain ATCC 17029 / ATH 2.4.9) (Rhodobacter sphaeroides) protein is D-aminoacyl-tRNA deacylase.